A 254-amino-acid polypeptide reads, in one-letter code: Translation initiation factor 2 subunit alpha (254 aa).

One can recognise an S1 motif domain in the interval 10–81 (GDLVVVKITE…ERKNVDLSLK (72 aa)).

It belongs to the eIF-2-alpha family. Heterotrimer composed of an alpha, a beta and a gamma chain.

Functionally, eIF-2 functions in the early steps of protein synthesis by forming a ternary complex with GTP and initiator tRNA. The sequence is that of Translation initiation factor 2 subunit alpha from Thermoplasma volcanium (strain ATCC 51530 / DSM 4299 / JCM 9571 / NBRC 15438 / GSS1).